Here is a 235-residue protein sequence, read N- to C-terminus: Small ribosomal subunit protein uS2c (235 aa).

It belongs to the universal ribosomal protein uS2 family.

It is found in the plastid. Its subcellular location is the chloroplast. This Zygnema circumcarinatum (Green alga) protein is Small ribosomal subunit protein uS2c (rps2).